Consider the following 402-residue polypeptide: CCA-adding enzyme (402 aa).

Positions 32 and 35 each coordinate ATP. Residues glycine 32 and arginine 35 each coordinate CTP. Residues aspartate 45 and aspartate 47 each contribute to the Mg(2+) site. ATP contacts are provided by arginine 116, aspartate 159, arginine 162, arginine 165, and arginine 168. Residues arginine 116, aspartate 159, arginine 162, arginine 165, and arginine 168 each coordinate CTP.

The protein belongs to the tRNA nucleotidyltransferase/poly(A) polymerase family. Bacterial CCA-adding enzyme type 3 subfamily. In terms of assembly, homodimer. It depends on Mg(2+) as a cofactor.

It carries out the reaction a tRNA precursor + 2 CTP + ATP = a tRNA with a 3' CCA end + 3 diphosphate. The catalysed reaction is a tRNA with a 3' CCA end + 2 CTP + ATP = a tRNA with a 3' CCACCA end + 3 diphosphate. Functionally, catalyzes the addition and repair of the essential 3'-terminal CCA sequence in tRNAs without using a nucleic acid template. Adds these three nucleotides in the order of C, C, and A to the tRNA nucleotide-73, using CTP and ATP as substrates and producing inorganic pyrophosphate. tRNA 3'-terminal CCA addition is required both for tRNA processing and repair. Also involved in tRNA surveillance by mediating tandem CCA addition to generate a CCACCA at the 3' terminus of unstable tRNAs. While stable tRNAs receive only 3'-terminal CCA, unstable tRNAs are marked with CCACCA and rapidly degraded. The sequence is that of CCA-adding enzyme from Streptococcus pyogenes serotype M3 (strain ATCC BAA-595 / MGAS315).